A 115-amino-acid chain; its full sequence is Ubiquitin-related modifier 1 (115 aa).

Gly-115 is subject to 1-thioglycine. Gly-115 participates in a covalent cross-link: Glycyl lysine isopeptide (Gly-Lys) (interchain with K-? in acceptor proteins).

It belongs to the URM1 family. In terms of processing, C-terminal thiocarboxylation occurs in 2 steps, it is first acyl-adenylated (-COAMP) via the hesA/moeB/thiF part of UBA4, then thiocarboxylated (-COSH) via the rhodanese domain of UBA4.

Its subcellular location is the cytoplasm. Its pathway is tRNA modification; 5-methoxycarbonylmethyl-2-thiouridine-tRNA biosynthesis. Acts as a sulfur carrier required for 2-thiolation of mcm(5)S(2)U at tRNA wobble positions of cytosolic tRNA(Lys), tRNA(Glu) and tRNA(Gln). Serves as sulfur donor in tRNA 2-thiolation reaction by being thiocarboxylated (-COSH) at its C-terminus by the MOCS3 homolog UBA4. The sulfur is then transferred to tRNA to form 2-thiolation of mcm(5)S(2)U. Prior mcm(5) tRNA modification by the elongator complex is required for 2-thiolation. Also acts as a ubiquitin-like protein (UBL) that is covalently conjugated via an isopeptide bond to lysine residues of target proteins such as AHP1. The thiocarboxylated form serves as substrate for conjugation and oxidative stress specifically induces the formation of UBL-protein conjugates. The chain is Ubiquitin-related modifier 1 from Coccidioides immitis (strain RS) (Valley fever fungus).